The chain runs to 351 residues: Photosystem II D2 protein (351 aa).

The helical transmembrane segment at 39–59 threads the bilayer; that stretch reads TAYLAIGGWLTGTTFVTSWYT. His-116 is a chlorophyll a binding site. Residues 123-139 form a helical membrane-spanning segment; sequence GFMLRQFEIARLVGIRP. The pheophytin a site is built by Gln-128 and Asn-141. The chain crosses the membrane as a helical span at residues 151 to 164; that stretch reads VFVSVFLMYPLGQS. Residue His-196 participates in chlorophyll a binding. The chain crosses the membrane as a helical span at residues 206-226; sequence GALLCAIHGATVENTLFEDGE. A plastoquinone-binding residues include His-213 and Phe-260. His-213 lines the Fe cation pocket. His-267 contributes to the Fe cation binding site. A helical transmembrane segment spans residues 277–293; that stretch reads GLWTSSIGIIGLALNLR.

It belongs to the reaction center PufL/M/PsbA/D family. PSII is composed of 1 copy each of membrane proteins PsbA, PsbB, PsbC, PsbD, PsbE, PsbF, PsbH, PsbI, PsbJ, PsbK, PsbL, PsbM, PsbT, PsbX, PsbY, PsbZ, Psb30/Ycf12, peripheral proteins PsbO, CyanoQ (PsbQ), PsbU, PsbV and a large number of cofactors. It forms dimeric complexes. The cofactor is The D1/D2 heterodimer binds P680, chlorophylls that are the primary electron donor of PSII, and subsequent electron acceptors. It shares a non-heme iron and each subunit binds pheophytin, quinone, additional chlorophylls, carotenoids and lipids. There is also a Cl(-1) ion associated with D1 and D2, which is required for oxygen evolution. The PSII complex binds additional chlorophylls, carotenoids and specific lipids..

The protein localises to the cellular thylakoid membrane. It catalyses the reaction 2 a plastoquinone + 4 hnu + 2 H2O = 2 a plastoquinol + O2. Photosystem II (PSII) is a light-driven water:plastoquinone oxidoreductase that uses light energy to abstract electrons from H(2)O, generating O(2) and a proton gradient subsequently used for ATP formation. It consists of a core antenna complex that captures photons, and an electron transfer chain that converts photonic excitation into a charge separation. The D1/D2 (PsbA/PsbD) reaction center heterodimer binds P680, the primary electron donor of PSII as well as several subsequent electron acceptors. D2 is needed for assembly of a stable PSII complex. This Parasynechococcus marenigrum (strain WH8102) protein is Photosystem II D2 protein.